The following is a 906-amino-acid chain: Serine-aspartate repeat-containing protein C (906 aa).

Residues 1–50 (MNNKKTATNRKGMIPNRLNKFSIRKYSVGTASILVGTTLIFGLSGHEAKA) form the signal peptide. A disordered region spans residues 51-127 (AEHTNGELNQ…QPTKKNNDAT (77 aa)). Residues 51-486 (AEHTNGELNQ…GSSTANGDQK (436 aa)) are ligand binding A region. 2 stretches are compositionally biased toward polar residues: residues 56-71 (GELNQSKNEATAPSEN) and 80-119 (RQQNNVEQSTTSNQPKVNESDNTSVKETTEEPQNTTSTQP). 2 consecutive CNA-B domains span residues 487-597 (KYNL…YKTP) and 598-708 (KYSL…EEET). Residues 669–881 (KQTGTNTTED…TGSENNGSNN (213 aa)) are disordered. Composition is skewed to acidic residues over residues 676–686 (TEDDKDADGGE) and 703–845 (YFEE…DSDS). The short motif at 869–873 (LPETG) is the LPXTG sorting signal element. The residue at position 872 (threonine 872) is a Pentaglycyl murein peptidoglycan amidated threonine. Positions 873 to 906 (GSENNGSNNATLFGGLFAALGSLLLFGRRKKQNK) are cleaved as a propeptide — removed by sortase.

Belongs to the serine-aspartate repeat-containing protein (SDr) family. As to quaternary structure, homodimerizes; via N2-Domain. Interacts with host NRXN1; this interaction mediates bacterial attachment to host cells.

It localises to the secreted. The protein resides in the cell wall. Functionally, cell surface-associated calcium-binding protein which plays an important role in adhesion and pathogenesis. Mediates interactions with components of the extracellular matrix such as host NRXN1 to promote bacterial adhesion. This chain is Serine-aspartate repeat-containing protein C (sdrC), found in Staphylococcus aureus (strain MRSA252).